A 125-amino-acid chain; its full sequence is uncharacterized protein (125 aa).

The protein localises to the plastid. It is found in the chloroplast. This is an uncharacterized protein from Guillardia theta (Cryptophyte).